The sequence spans 346 residues: Peroxidase 37 (346 aa).

An N-terminal signal peptide occupies residues 1–22 (MHSSLIKLGFLLLLIQVSLSHA). A Pyrrolidone carboxylic acid modification is found at Q23. Intrachain disulfides connect C33/C113, C66/C71, C119/C323, and C199/C231. H64 serves as the catalytic Proton acceptor. Ca(2+) is bound by residues D65, V68, G70, D72, and S74. The N-linked (GlcNAc...) asparagine glycan is linked to N79. P161 contributes to the substrate binding site. H192 contributes to the heme b binding site. Residue T193 coordinates Ca(2+). N-linked (GlcNAc...) asparagine glycans are attached at residues N208 and N236. D244, T247, and D252 together coordinate Ca(2+).

It belongs to the peroxidase family. Classical plant (class III) peroxidase subfamily. Heme b serves as cofactor. Requires Ca(2+) as cofactor.

The protein resides in the secreted. It localises to the vacuole. It carries out the reaction 2 a phenolic donor + H2O2 = 2 a phenolic radical donor + 2 H2O. In terms of biological role, removal of H(2)O(2), oxidation of toxic reductants, biosynthesis and degradation of lignin, suberization, auxin catabolism, response to environmental stresses such as wounding, pathogen attack and oxidative stress. These functions might be dependent on each isozyme/isoform in each plant tissue. This chain is Peroxidase 37 (PER37), found in Arabidopsis thaliana (Mouse-ear cress).